A 513-amino-acid chain; its full sequence is MPVEAPRPARHLEVERKFDVIESTVSPSFEGIAAVVRVEQSPTQQLDAVYFDTPSHDLARNQITLRRRTGGADAGWHLKLPAGPDKRTEMRAPLSASGDAVPAELLDVVLAIVRDQPVQPVARISTHRESQILYGAGGDALAEFCNDDVTAWSAGAFHAAGAADNGPAEQQWREWELELVTTDGTADTKLLDRLANRLLDAGAAPAGHGSKLARVLGATSPGELPNGPQPPADPVHRAVSEQVEQLLLWDRAVRADAYDAVHQMRVTTRKIRSLLTDSQESFGLKESAWVIDELRELADVLGVARDAEVLGDRYQRELDALAPELVRGRVRERLVDGARRRYQTGLRRSLIALRSQRYFRLLDALDALVSERAHATSGEESAPVTIDAAYRRVRKAAKAAKTAGDQAGDHHRDEALHLIRKRAKRLRYTAAATGADNVSQEAKVIQTLLGDHQDSVVSREHLIQQAIAANTAGEDTFTYGLLYQQEADLAERCREQLEAALRKLDKAVRKARD.

Positions 11–219 (HLEVERKFDV…SKLARVLGAT (209 aa)) constitute a CYTH domain. Residues 228–506 (PQPPADPVHR…LEAALRKLDK (279 aa)) enclose the CHAD domain.

This is an uncharacterized protein from Mycobacterium tuberculosis (strain ATCC 25618 / H37Rv).